We begin with the raw amino-acid sequence, 96 residues long: MKIRPLHDRVLVKRQEVESKSAGGIVLTGSAAGKSTRGTVTAVGKGRVLDNGDIKPLDVKVGDVVIFNEGYGAKTEKIDNEELLILTESDILAIVE.

The protein belongs to the GroES chaperonin family. As to quaternary structure, heptamer of 7 subunits arranged in a ring. Interacts with the chaperonin GroEL.

Its subcellular location is the cytoplasm. In terms of biological role, together with the chaperonin GroEL, plays an essential role in assisting protein folding. The GroEL-GroES system forms a nano-cage that allows encapsulation of the non-native substrate proteins and provides a physical environment optimized to promote and accelerate protein folding. GroES binds to the apical surface of the GroEL ring, thereby capping the opening of the GroEL channel. In Buchnera aphidicola subsp. Acyrthosiphon pisum (strain 5A), this protein is Co-chaperonin GroES.